A 1137-amino-acid chain; its full sequence is Phytochrome C (1137 aa).

Over residues 1-18 the composition is skewed to low complexity; it reads MSSSRSNNRATCSRSSSA. The segment at 1–27 is disordered; that stretch reads MSSSRSNNRATCSRSSSARSKHSARVV. One can recognise a GAF domain in the interval 217–400; the sequence is NLSLLCDVLV…VFGIQINKEV (184 aa). A phytochromobilin-binding site is contributed by cysteine 322. PAS domains follow at residues 620–690 and 750–824; these read VTNE…LQGI and IQGD…TKLS. The 221-residue stretch at 904–1124 folds into the Histidine kinase domain; the sequence is YIRQELRNPL…IVLVEFPVAQ (221 aa).

This sequence belongs to the phytochrome family. As to quaternary structure, homodimer. Post-translationally, contains one covalently linked phytochromobilin chromophore.

In terms of biological role, regulatory photoreceptor which exists in two forms that are reversibly interconvertible by light: the Pr form that absorbs maximally in the red region of the spectrum and the Pfr form that absorbs maximally in the far-red region. Photoconversion of Pr to Pfr induces an array of morphogenic responses, whereas reconversion of Pfr to Pr cancels the induction of those responses. Pfr controls the expression of a number of nuclear genes including those encoding the small subunit of ribulose-bisphosphate carboxylase, chlorophyll A/B binding protein, protochlorophyllide reductase, rRNA, etc. It also controls the expression of its own gene(s) in a negative feedback fashion. The polypeptide is Phytochrome C (PHYC) (Oryza sativa subsp. japonica (Rice)).